We begin with the raw amino-acid sequence, 132 residues long: Small ribosomal subunit protein uS8 (132 aa).

This sequence belongs to the universal ribosomal protein uS8 family. As to quaternary structure, part of the 30S ribosomal subunit. Contacts proteins S5 and S12.

In terms of biological role, one of the primary rRNA binding proteins, it binds directly to 16S rRNA central domain where it helps coordinate assembly of the platform of the 30S subunit. The polypeptide is Small ribosomal subunit protein uS8 (Bradyrhizobium sp. (strain BTAi1 / ATCC BAA-1182)).